The primary structure comprises 400 residues: Elongation factor Tu (400 aa).

The tr-type G domain maps to 10–208; it reads KPHVNVGTIG…AMDNYIPDPQ (199 aa). The interval 19–26 is G1; it reads GHIDHGKS. 19-26 is a GTP binding site; that stretch reads GHIDHGKS. S26 contacts Mg(2+). Residues 60–64 form a G2 region; sequence GITIN. Positions 81 to 84 are G3; it reads DCPG. GTP-binding positions include 81–85 and 136–139; these read DCPGH and NKTD. Residues 136 to 139 form a G4 region; sequence NKTD. Positions 174–176 are G5; sequence SAL.

The protein belongs to the TRAFAC class translation factor GTPase superfamily. Classic translation factor GTPase family. EF-Tu/EF-1A subfamily. Monomer.

It is found in the cytoplasm. It catalyses the reaction GTP + H2O = GDP + phosphate + H(+). Its function is as follows. GTP hydrolase that promotes the GTP-dependent binding of aminoacyl-tRNA to the A-site of ribosomes during protein biosynthesis. The protein is Elongation factor Tu of Thermotoga maritima (strain ATCC 43589 / DSM 3109 / JCM 10099 / NBRC 100826 / MSB8).